Consider the following 373-residue polypeptide: Mannitol-1-phosphate 5-dehydrogenase (373 aa).

Ala3–Gly14 lines the NAD(+) pocket.

It belongs to the mannitol dehydrogenase family.

The enzyme catalyses D-mannitol 1-phosphate + NAD(+) = beta-D-fructose 6-phosphate + NADH + H(+). The polypeptide is Mannitol-1-phosphate 5-dehydrogenase (mtlD) (Bacillus subtilis (strain 168)).